Consider the following 1450-residue polypeptide: ABC transporter G family member 37 (1450 aa).

Residues 175 to 447 (VKLTGAKTHE…FEDCGFRCPE (273 aa)) form the ABC transporter 1 domain. Position 207 to 214 (207 to 214 (GPPSCGKT)) interacts with ATP. In terms of domain architecture, ABC transmembrane type-2 1 spans 525-737 (ELFIACISRE…GEIGLSVNEF (213 aa)). Helical transmembrane passes span 544-564 (VYIF…TVFI), 581-601 (ALFF…SMTA), 615-635 (FYPA…LSFF), 661-681 (FILL…LAAI), 687-707 (ASIT…GFVI), and 773-793 (LCAL…ALTF). The disordered stretch occupies residues 810–838 (SELQGTEKSTEDSSVRKKTTDSPVKTEEE). Residues 817 to 838 (KSTEDSSVRKKTTDSPVKTEEE) show a composition bias toward basic and acidic residues. Residues 850–1103 (VTFQDLNYFV…IIEYFESVPE (254 aa)) form the ABC transporter 2 domain. 895–902 (GVSGAGKT) contacts ATP. The ABC transmembrane type-2 2 domain maps to 1175–1389 (GQFKSILWKM…TLNGFISSQY (215 aa)). A run of 7 helical transmembrane segments spans residues 1194–1214 (YNLM…ALFW), 1226–1246 (MFTV…NNCA), 1282–1302 (IPYI…MIGF), 1313–1333 (LYSM…LVSI), 1339–1359 (VAAI…GFLI), 1365–1385 (PGWW…NGFI), and 1422–1442 (VTAV…AFFV).

This sequence belongs to the ABC transporter superfamily. ABCG family. PDR (TC 3.A.1.205) subfamily. Expressed in roots and, to a lower extent, in seedlings.

The protein localises to the cell membrane. Functionally, together with ABCG36, regulates auxin homeostasis and responses by playing a dual role in coumarin (and derivatives) and in the auxin precursor indole 3-butyric acid (IBA) efflux transport, thus influencing roots and root hairs development. Mediates coumarin exudation in the rhizosphere, especially in iron (Fe) deficient conditions, with a strong specificity for highly oxygenated compounds such as scopoletin and derivatives, dihydroxyscopoletin, esculetin, fraxin, fraxetin and esculin; these molecules improve plant Fe nutrition. Involved in the cellular detoxification of xenobiotics by promoting the excretion of some auxinic herbicides including 2,4-dichlorophenoxyacetic acid (2,4-D), 4-(2,4-dichlorophenoxy)butyric acid (2,4-DB) and other members of the phenoxyalkanoic acid family as well as the polar auxin transport inhibitor, napthylphthalamic acid (NPA). May be a general defense protein. This is ABC transporter G family member 37 from Arabidopsis thaliana (Mouse-ear cress).